The following is a 249-amino-acid chain: Large ribosomal subunit protein uL30A (249 aa).

The protein belongs to the universal ribosomal protein uL30 family. In terms of assembly, component of the small ribosomal subunit (SSU). Mature yeast ribosomes consist of a small (40S) and a large (60S) subunit. The 40S small subunit contains 1 molecule of ribosomal RNA (18S rRNA) and at least 33 different proteins. The large 60S subunit contains 3 rRNA molecules (25S, 5.8S and 5S rRNA) and at least 46 different proteins.

Its subcellular location is the cytoplasm. The protein localises to the nucleus. The protein resides in the nucleolus. Functionally, component of the ribosome, a large ribonucleoprotein complex responsible for the synthesis of proteins in the cell. The small ribosomal subunit (SSU) binds messenger RNAs (mRNAs) and translates the encoded message by selecting cognate aminoacyl-transfer RNA (tRNA) molecules. The large subunit (LSU) contains the ribosomal catalytic site termed the peptidyl transferase center (PTC), which catalyzes the formation of peptide bonds, thereby polymerizing the amino acids delivered by tRNAs into a polypeptide chain. The nascent polypeptides leave the ribosome through a tunnel in the LSU and interact with protein factors that function in enzymatic processing, targeting, and the membrane insertion of nascent chains at the exit of the ribosomal tunnel. The polypeptide is Large ribosomal subunit protein uL30A (rlp7) (Schizosaccharomyces pombe (strain 972 / ATCC 24843) (Fission yeast)).